We begin with the raw amino-acid sequence, 344 residues long: Ferrochelatase (344 aa).

Fe cation-binding residues include histidine 191 and glutamate 271.

It belongs to the ferrochelatase family.

It is found in the cytoplasm. It catalyses the reaction heme b + 2 H(+) = protoporphyrin IX + Fe(2+). It functions in the pathway porphyrin-containing compound metabolism; protoheme biosynthesis; protoheme from protoporphyrin-IX: step 1/1. Its function is as follows. Catalyzes the ferrous insertion into protoporphyrin IX. The polypeptide is Ferrochelatase (Pelagibacter ubique (strain HTCC1062)).